Consider the following 1220-residue polypeptide: Plasma membrane calcium-transporting ATPase 1 (1220 aa).

An N-acetylglycine modification is found at G2. Residues 2–105 (GDMANNSVAY…KTFLQLVWEA (104 aa)) are Cytoplasmic-facing. Residues S8 and S17 each carry the phosphoserine modification. Residues 106 to 126 (LQDVTLIILEIAAIVSLGLSF) form a helical membrane-spanning segment. The Extracellular segment spans residues 127-154 (YQPPEGDNALCGEVSVGEEEGEGETGWI). A helical transmembrane segment spans residues 155–175 (EGAAILLSVVCVVLVTAFNDW). Residues 176-366 (SKEKQFRGLQ…KEKSVLQGKL (191 aa)) are Cytoplasmic-facing. The segment at 297–356 (EEEKKDEKKKEKKNKKQDGAIENRNKAKAQDGAAMEMQPLKSEEGGDGDEKDKKKANLPK) is disordered. Basic and acidic residues-rich tracts occupy residues 312–325 (KQDG…KAKA) and 337–356 (KSEE…NLPK). Position 338 is a phosphoserine (S338). The chain crosses the membrane as a helical span at residues 367–386 (TKLAVQIGKAGLLMSAITVI). At 387–418 (ILVLYFVIDTFWVQKRPWLAECTPIYIQYFVK) the chain is on the extracellular side. The chain crosses the membrane as a helical span at residues 419 to 439 (FFIIGVTVLVVAVPEGLPLAV). The Cytoplasmic portion of the chain corresponds to 440–855 (TISLAYSVKK…RNVYDSISKF (416 aa)). Catalysis depends on D475, which acts as the 4-aspartylphosphate intermediate. Residues D475, T477, and D797 each contribute to the Mg(2+) site. A helical membrane pass occupies residues 856 to 876 (LQFQLTVNVVAVIVAFTGACI). The Extracellular segment spans residues 877–882 (TQDSPL). Residues 883–903 (KAVQMLWVNLIMDTLASLALA) form a helical membrane-spanning segment. The Cytoplasmic segment spans residues 904 to 927 (TEPPTESLLLRKPYGRNKPLISRT). A helical transmembrane segment spans residues 928–948 (MMKNILGHAFYQLVVVFTLLF). The Extracellular portion of the chain corresponds to 949-971 (AGEKFFDIDSGRNAPLHAPPSEH). Residues 972–991 (YTIVFNTFVLMQLFNEINAR) traverse the membrane as a helical segment. Residues 992–1005 (KIHGERNVFEGIFN) are Cytoplasmic-facing. A helical transmembrane segment spans residues 1006 to 1027 (NAIFCTIVLGTFVVQIIIVQFG). Over 1028-1039 (GKPFSCSELSIE) the chain is Extracellular. A helical membrane pass occupies residues 1040–1060 (QWLWSIFLGMGTLLWGQLIST). Residues 1061–1220 (IPTSRLKFLK…SPLHSLETSL (160 aa)) lie on the Cytoplasmic side of the membrane. The segment at 1100 to 1117 (LRRGQILWFRGLNRIQTQ) is calmodulin-binding subdomain A. T1116 is modified (phosphothreonine; by PKC). The segment at 1118 to 1220 (IRVVNAFRSS…SPLHSLETSL (103 aa)) is required for basolateral membrane targeting. 2 positions are modified to phosphoserine: S1140 and S1155. Residues 1160 to 1220 (PLIDDTDAED…SPLHSLETSL (61 aa)) form a disordered region. T1165 is subject to Phosphothreonine. Phosphoserine occurs at positions 1178 and 1182. The span at 1200–1220 (MNKSATSSSPGSPLHSLETSL) shows a compositional bias: polar residues.

This sequence belongs to the cation transport ATPase (P-type) (TC 3.A.3) family. Type IIB subfamily. In terms of assembly, monomer. Dimer. Oligomer. Calmodulin binding. Interacts with PDZD11. Interacts with SLC35G1 and STIM1. Interacts with YWHAE; interacts with the monomeric and dimeric forms of the YWHAE but prefer the monomer form; this interaction inhibits calcium-transporting ATPase activity. Interacts with NPTN; this interaction stabilizes ATP2B1 and increases ATPase activity; this interaction controls T cell calcium homeostasis following T cell activation. Interacts with EPB41; regulates small intestinal calcium absorption through regulation of membrane expression of ATP2B1. Expressed in the retina, with strongest expression in the outer plexiform layer and lower expression levels in the inner nuclear layer and the inner plexiform layer. Specifically expressed in the following retinal cell types: photoreceptor cells, cone bipolar cells and horizontal cells. Expressed in osteoclasts (at protein level). Expressed at highest levels in brain, intestine, kidney, and stomach, and at lower levels in liver, lung, aorta, portal vein, urinary bladder, diaphragm, seminal vesicles and testes. Expressed in small intestinal epithelium.

Its subcellular location is the cell membrane. The protein localises to the basolateral cell membrane. It localises to the synapse. The protein resides in the presynaptic cell membrane. It is found in the cytoplasmic vesicle. Its subcellular location is the secretory vesicle. The protein localises to the synaptic vesicle membrane. The catalysed reaction is Ca(2+)(in) + ATP + H2O = Ca(2+)(out) + ADP + phosphate + H(+). In terms of biological role, catalyzes the hydrolysis of ATP coupled with the transport of calcium from the cytoplasm to the extracellular space thereby maintaining intracellular calcium homeostasis. Plays a role in blood pressure regulation through regulation of intracellular calcium concentration and nitric oxide production leading to regulation of vascular smooth muscle cells vasoconstriction. Positively regulates bone mineralization through absorption of calcium from the intestine. Plays dual roles in osteoclast differentiation and survival by regulating RANKL-induced calcium oscillations in preosteoclasts and mediating calcium extrusion in mature osteoclasts. Regulates insulin sensitivity through calcium/calmodulin signaling pathway by regulating AKT1 activation and NOS3 activation in endothelial cells. May play a role in synaptic transmission by modulating calcium and proton dynamics at the synaptic vesicles. The polypeptide is Plasma membrane calcium-transporting ATPase 1 (Mus musculus (Mouse)).